Consider the following 993-residue polypeptide: Muscular LMNA-interacting protein (993 aa).

The interval M1–V51 is interaction with LMNA. The interval P71–Y90 is disordered. Over residues E80–Y90 the composition is skewed to polar residues. S146 bears the Phosphoserine mark. Disordered stretches follow at residues A152–R171, V186–Q225, P231–L250, P300–L322, S334–S358, S443–L481, T500–Y582, S677–L711, and L811–T864. The segment at P161–T837 is required for interaction with ISL1. Polar residues predominate over residues K212–Q225. Residues P300–A315 are compositionally biased toward polar residues. Residues P343–S358 show a composition bias toward low complexity. Residues T500–K532 are compositionally biased toward polar residues. A compositionally biased stretch (low complexity) spans S533–K563. A compositionally biased stretch (basic and acidic residues) spans S564 to E574. Residues S695–L711 show a composition bias toward polar residues. The span at L811–S822 shows a compositional bias: low complexity. A Phosphoserine modification is found at S818. Residues A849–T864 are compositionally biased toward polar residues.

In terms of assembly, directly interacts with LMNA. Interacts with ISL1 (via N-terminal domain); the interaction represses ISL1 transactivator activity. Interactions of ISL1 with MLIP1 and GCN5/KAT2A may be mutually exclusive. Predominantly expressed in the heart and skeletal muscle. Also detected in liver. In terms of tissue distribution, expressed in skeletal muscle.

The protein localises to the nucleus. It is found in the nucleus envelope. The protein resides in the PML body. It localises to the cytoplasm. Its subcellular location is the cytosol. The protein localises to the cell membrane. It is found in the sarcolemma. Functionally, required for myoblast differentiation into myotubes, possibly acting as a transcriptional regulator of the myogenic program. Required for cardiac adaptation to stress through integrated regulation of the AKT/mTOR pathways and FOXO1. Regulates cardiac homeostasis and plays a role in the protection against cardiac hypertrophy. Binds chromatin. May act as a transcriptional cofactor for ISL1, repressing its transcriptional activity. May also repress MYOCD transcriptional activity. This is Muscular LMNA-interacting protein from Homo sapiens (Human).